Reading from the N-terminus, the 401-residue chain is MTYNQPNNQGFYGQFGGQFVPETLMTAVKELEVAYEDSKKDPVFQAELKELLKDYVGRENPLYFAKRLTEYAGGAKIYLKREDLNHTGAHKINNALGQVLLAKKMGKNKVIAETGAGQHGVATATAAALFGMECTIYMGEEDVKRQSLNVFRMELLGAKVHSVTDGSRVLKDAVNAALRAWVAQVEDTHYVMGSVLGPHPFPQIVRDYQAVIGQEARAQFLEKENKLPDALVACVGGGSNSMGLFYPFVNDESVEMYGVEAAGLGIDTPHHAATITKGRPGVLHGTLMDVLQDENGQILEAFSISAGLDYPGIGPEHSYFNAVGRAKYVDITDEEALEGFKILSRTEGIIPALESSHAIAYAVKLAKELGSEKTMIVCLSGRGDKDVVQVKERLEAEKEVK.

Residue K91 is modified to N6-(pyridoxal phosphate)lysine.

It belongs to the TrpB family. Tetramer of two alpha and two beta chains. Pyridoxal 5'-phosphate serves as cofactor.

The enzyme catalyses (1S,2R)-1-C-(indol-3-yl)glycerol 3-phosphate + L-serine = D-glyceraldehyde 3-phosphate + L-tryptophan + H2O. It participates in amino-acid biosynthesis; L-tryptophan biosynthesis; L-tryptophan from chorismate: step 5/5. Functionally, the beta subunit is responsible for the synthesis of L-tryptophan from indole and L-serine. This Lactococcus lactis subsp. cremoris (strain SK11) protein is Tryptophan synthase beta chain.